The following is a 208-amino-acid chain: Dual specificity protein phosphatase 22-A (208 aa).

In terms of domain architecture, Tyrosine-protein phosphatase spans 4–144; it reads GMNKVIDGLY…LQEFQMKQVS (141 aa). The active-site Phosphocysteine intermediate is cysteine 88.

Belongs to the protein-tyrosine phosphatase family. Non-receptor class dual specificity subfamily.

The protein resides in the cytoplasm. Its subcellular location is the nucleus. The catalysed reaction is O-phospho-L-tyrosyl-[protein] + H2O = L-tyrosyl-[protein] + phosphate. It carries out the reaction O-phospho-L-seryl-[protein] + H2O = L-seryl-[protein] + phosphate. The enzyme catalyses O-phospho-L-threonyl-[protein] + H2O = L-threonyl-[protein] + phosphate. Functionally, activates the Jnk signaling pathway. Dephosphorylates and deactivates p38 and stress-activated protein kinase/c-Jun N-terminal kinase (SAPK/JNK). In Danio rerio (Zebrafish), this protein is Dual specificity protein phosphatase 22-A.